A 257-amino-acid polypeptide reads, in one-letter code: Ribonuclease HII (257 aa).

Residues 72 to 257 enclose the RNase H type-2 domain; it reads TYIAGIDEVG…FAPIKDMIQK (186 aa). Residues D78, E79, and D170 each contribute to the a divalent metal cation site.

Belongs to the RNase HII family. Mn(2+) serves as cofactor. It depends on Mg(2+) as a cofactor.

The protein localises to the cytoplasm. The catalysed reaction is Endonucleolytic cleavage to 5'-phosphomonoester.. Functionally, endonuclease that specifically degrades the RNA of RNA-DNA hybrids. This is Ribonuclease HII from Bacillus cereus (strain B4264).